The following is a 1547-amino-acid chain: Transposon Ty3-G Gag-Pol polyprotein (1547 aa).

N-acetylserine is present on Ser-2. The CCHC-type zinc-finger motif lies at 265–282; the sequence is RLCFYCKKEGHRLNECRA. The active-site For protease activity; shared with dimeric partner is Asp-336. In terms of domain architecture, Reverse transcriptase spans 620–797; sequence LDNKFIVPSK…EETEFLGYSI (178 aa). Residues Asp-686, Asp-748, Asp-749, Asp-893, Glu-936, and Asp-961 each coordinate Mg(2+). In terms of domain architecture, RNase H Ty3/gyspy-type spans 893-1011; sequence DASKDGIGAV…VADAISRAVY (119 aa). Residues 1106–1145 form an integrase-type zinc finger-like region; it reads HTLFGGHFGVTVTLAKISPIYYWPKLQHSIIQYIRTCVQC. An Integrase catalytic domain is found at 1159–1324; the sequence is LQPLPIAEGR…SPFEIDLGYL (166 aa). Mg(2+)-binding residues include Asp-1175 and Asp-1236.

As to quaternary structure, the protease is a homodimer, whose active site consists of two apposed aspartic acid residues. Initially, virus-like particles (VLPs) are composed of the structural unprocessed proteins Gag and Gag-Pol, and also contain the host initiator methionine tRNA (tRNA(i)-Met) which serves as a primer for minus-strand DNA synthesis, and a dimer of genomic Ty RNA. Processing of the polyproteins occurs within the particle and proceeds by an ordered pathway, called maturation. First, the protease (PR) is released by autocatalytic cleavage of the Gag-Pol polyprotein, and this cleavage is a prerequisite for subsequent processing at the remaining sites to release the mature structural and catalytic proteins. Maturation takes place prior to the RT reaction and is required to produce transposition-competent VLPs.

Its subcellular location is the cytoplasm. It is found in the nucleus. It catalyses the reaction DNA(n) + a 2'-deoxyribonucleoside 5'-triphosphate = DNA(n+1) + diphosphate. The catalysed reaction is Endonucleolytic cleavage to 5'-phosphomonoester.. Capsid protein (CA) is the structural component of the virus-like particle (VLP), forming the shell that encapsulates the genomic RNA-nucleocapsid complex. Its function is as follows. Nucleocapsid protein p11 (NC) forms the nucleocore that coats the retro-elements dimeric RNA. Binds these RNAs through its zinc fingers. Promotes primer tRNA(i)-Met annealing to the multipartite primer-binding site (PBS), dimerization of Ty3 RNA and initiation of reverse transcription. Functionally, the aspartyl protease (PR) mediates the proteolytic cleavages of the Gag and Gag-Pol polyproteins after assembly of the VLP. In terms of biological role, reverse transcriptase/ribonuclease H (RT) is a multifunctional enzyme that catalyzes the conversion of the retro-elements RNA genome into dsDNA within the VLP. The enzyme displays a DNA polymerase activity that can copy either DNA or RNA templates, and a ribonuclease H (RNase H) activity that cleaves the RNA strand of RNA-DNA heteroduplexes during plus-strand synthesis and hydrolyzes RNA primers. The conversion leads to a linear dsDNA copy of the retrotransposon that includes long terminal repeats (LTRs) at both ends. Integrase (IN) targets the VLP to the nucleus, where a subparticle preintegration complex (PIC) containing at least integrase and the newly synthesized dsDNA copy of the retrotransposon must transit the nuclear membrane. Once in the nucleus, integrase performs the integration of the dsDNA into the host genome. This is Transposon Ty3-G Gag-Pol polyprotein (TY3B-G) from Saccharomyces cerevisiae (strain ATCC 204508 / S288c) (Baker's yeast).